The chain runs to 286 residues: Transcription factor MafA (286 aa).

Phosphoserine occurs at positions 14 and 49. Residues 51 to 85 (SSTPLSTPCSSVPSSPSFCAPSPGGQPSAGPTAAP) show a composition bias toward low complexity. The tract at residues 51-87 (SSTPLSTPCSSVPSSPSFCAPSPGGQPSAGPTAAPLG) is disordered. A phosphothreonine mark is found at T53 and T57. Residues S61 and S65 each carry the phosphoserine modification. Position 113 is a phosphothreonine (T113). A disordered region spans residues 126–167 (HHHHHHHQSYESFRPQPFGGEELPPAAHHHNAHHHHHHHHLR). The span at 152 to 166 (AHHHNAHHHHHHHHL) shows a compositional bias: basic residues. The basic motif stretch occupies residues 199–224 (RLKQNRRTLKNRGYAQSCRYKRVQQR). In terms of domain architecture, bZIP spans 199 to 262 (RLKQNRRTLK…DLYKEKYEKL (64 aa)). Residues 227–248 (LENEKCQLQSQVEQLKQEVSRL) form a leucine-zipper region. Residues 265–286 (RGFPREPSPPAAPKTTAADFFM) are disordered. S272 carries the post-translational modification Phosphoserine. Residues 277–286 (PKTTAADFFM) show a composition bias toward low complexity.

The protein belongs to the bZIP family. Maf subfamily. As to quaternary structure, forms homodimers or heterodimers. May interact (via leucine-zipper domain) with MAFB. May interact with FOS and JUN. Interacts with PCAF; this interaction impairs MAFA ubiquitination.

It localises to the nucleus. In terms of biological role, transcription factor involved in transcription regulation during lens development, including that of crystallin and filensin/BFSP1 genes. Binds to CRE-type MARE 5'-TGCTGACGTCAGCA-3' and TRE-type MARE 5'-TGCTGACTCAGCA-3' DNA sequences. This Gallus gallus (Chicken) protein is Transcription factor MafA (MAFA).